The chain runs to 534 residues: NAD(P)H-quinone oxidoreductase chain 4 2 (534 aa).

The next 13 membrane-spanning stretches (helical) occupy residues 6–26 (FPWL…IPLL), 38–58 (WYSL…FWTS), 93–113 (LILL…PVTF), 117–137 (FFYF…AVQD), 138–158 (LLVF…LLAI), 171–191 (FILY…AMAF), 210–230 (IGFQ…KLPI), 245–265 (TAPV…YALF), 279–299 (FAPI…LTSF), 313–333 (ISHM…GLSG), 335–355 (MLQM…VGAT), 377–399 (MFAM…GFVA), and 419–439 (VVVI…LLSM).

It belongs to the complex I subunit 4 family.

The protein resides in the cellular thylakoid membrane. It carries out the reaction a plastoquinone + NADH + (n+1) H(+)(in) = a plastoquinol + NAD(+) + n H(+)(out). It catalyses the reaction a plastoquinone + NADPH + (n+1) H(+)(in) = a plastoquinol + NADP(+) + n H(+)(out). Its function is as follows. NDH-1 shuttles electrons from NAD(P)H, via FMN and iron-sulfur (Fe-S) centers, to quinones in the respiratory chain. The immediate electron acceptor for the enzyme in this species is believed to be plastoquinone. Couples the redox reaction to proton translocation (for every two electrons transferred, four hydrogen ions are translocated across the cytoplasmic membrane), and thus conserves the redox energy in a proton gradient. This Synechococcus elongatus (strain ATCC 33912 / PCC 7942 / FACHB-805) (Anacystis nidulans R2) protein is NAD(P)H-quinone oxidoreductase chain 4 2.